Here is a 444-residue protein sequence, read N- to C-terminus: Transmembrane protein with metallophosphoesterase domain (444 aa).

A run of 5 helical transmembrane segments spans residues 7–27 (LSLG…MIVS), 43–63 (LFRL…SIYI), 87–107 (MVVA…IFLV), 114–134 (FSLV…FLCV), and 162–182 (LALR…VGLL). The a divalent metal cation site is built by Asp-214, His-216, Asp-246, Asn-277, His-382, and His-384.

Belongs to the metallophosphoesterase superfamily. LOC643853 family. A divalent metal cation serves as cofactor.

It localises to the membrane. The sequence is that of Transmembrane protein with metallophosphoesterase domain (TMPPE) from Bos taurus (Bovine).